Here is an 827-residue protein sequence, read N- to C-terminus: Periplasmic nitrate reductase (827 aa).

The segment at residues Met1–Ala33 is a signal peptide (tat-type signal). In terms of domain architecture, 4Fe-4S Mo/W bis-MGD-type spans Ile37–Asp93. Residues Cys44, Cys47, Cys51, and Cys79 each contribute to the [4Fe-4S] cluster site. Residues Lys81, Gln148, Asn173, Cys177, Trp210 to Met217, Ser241 to His245, Gln260 to Asp262, Met370, Gln374, Asn480, Ser506 to Asp507, Lys529, Asp556, and Thr716 to Thr725 each bind Mo-bis(molybdopterin guanine dinucleotide). Phe792 is a binding site for substrate. The Mo-bis(molybdopterin guanine dinucleotide) site is built by Asn800 and Lys817.

This sequence belongs to the prokaryotic molybdopterin-containing oxidoreductase family. NasA/NapA/NarB subfamily. In terms of assembly, component of the periplasmic nitrate reductase NapAB complex composed of NapA and NapB. [4Fe-4S] cluster is required as a cofactor. Requires Mo-bis(molybdopterin guanine dinucleotide) as cofactor. Predicted to be exported by the Tat system. The position of the signal peptide cleavage has not been experimentally proven.

It is found in the periplasm. The catalysed reaction is 2 Fe(II)-[cytochrome] + nitrate + 2 H(+) = 2 Fe(III)-[cytochrome] + nitrite + H2O. In terms of biological role, catalytic subunit of the periplasmic nitrate reductase complex NapAB. Receives electrons from NapB and catalyzes the reduction of nitrate to nitrite. This is Periplasmic nitrate reductase from Haemophilus influenzae (strain PittEE).